A 182-amino-acid chain; its full sequence is UPF0397 protein BT9727_2423 (182 aa).

5 helical membrane passes run 9-29, 40-60, 71-91, 114-134, and 142-162; these read VVAI…GFSI, AILT…IGLI, WGIW…MGFI, ITGL…DIIV, and IVIQ…VLGL.

Belongs to the UPF0397 family.

The protein resides in the cell membrane. The chain is UPF0397 protein BT9727_2423 from Bacillus thuringiensis subsp. konkukian (strain 97-27).